Here is a 514-residue protein sequence, read N- to C-terminus: MTEPLCLTPGGLSLDVLRRIHREAPPLTLDPRSYAAMAASQAVVAAIAGGESAVYGINTGFGKLAHKRIAPADLEALQTNLILSHATGMGAPIADATVRLILAIKAASLAVGASGIRAEIVDALLALANADVLPVIPSKGSVGASGDLAPLAHLCCALLGIGSVRHKGAVLPAGEGLAIAGLSPITLRAKEGLALINGTQVSTALALAGLFEIERAFAAAILAGALSVEAVMGSHRPFDPRISALRGQFGQIDVAALFRLLLDGSPLNAAHQGPSCERVQDPYSLRCQPQVMGAVLDQMRFAARTLTIEANGVTDNPLVLVDTGEVLSGGNFHAEPVAMAADQLAIAASEIGALSERRIAMLIDSTISGLPPFLVAEPGLNSGFMIAHVTAAALASENKSLAHPASVDSLPTSANQEDHVSMATFAARRLGDIAANVTGIVGIELLAAAQGLEFHRPLRSSQTLETAMAMIRERVPSYRVDRYFAPDLEAIAHLIGEGRFDALVPVDLSTLGSV.

Residues 144 to 146 constitute a cross-link (5-imidazolinone (Ala-Gly)); that stretch reads ASG. The residue at position 145 (Ser145) is a 2,3-didehydroalanine (Ser).

Belongs to the PAL/histidase family. Post-translationally, contains an active site 4-methylidene-imidazol-5-one (MIO), which is formed autocatalytically by cyclization and dehydration of residues Ala-Ser-Gly.

The protein resides in the cytoplasm. The catalysed reaction is L-histidine = trans-urocanate + NH4(+). The protein operates within amino-acid degradation; L-histidine degradation into L-glutamate; N-formimidoyl-L-glutamate from L-histidine: step 1/3. This is Histidine ammonia-lyase from Rhodospirillum rubrum (strain ATCC 11170 / ATH 1.1.1 / DSM 467 / LMG 4362 / NCIMB 8255 / S1).